The primary structure comprises 730 residues: Procollagen-lysine,2-oxoglutarate 5-dioxygenase 1 (730 aa).

Residues 1–20 form the signal peptide; sequence MVPPAVLLPWVVLPLLGVQG. N-linked (GlcNAc...) asparagine glycosylation is found at N200, N403, and N541. The Fe2OG dioxygenase domain maps to 639-730; the sequence is QFELAFVVRY…RYIAVSFIDP (92 aa). Residues H659 and D661 each contribute to the Fe cation site. N689 carries an N-linked (GlcNAc...) asparagine glycan. H711 is a binding site for Fe cation. R721 is a catalytic residue.

In terms of assembly, homodimer. Fe(2+) is required as a cofactor. Requires L-ascorbate as cofactor.

The protein resides in the rough endoplasmic reticulum membrane. It carries out the reaction L-lysyl-[collagen] + 2-oxoglutarate + O2 = (5R)-5-hydroxy-L-lysyl-[collagen] + succinate + CO2. Forms hydroxylysine residues in -Xaa-Lys-Gly- sequences in collagens. These hydroxylysines serve as sites of attachment for carbohydrate units and are essential for the stability of the intermolecular collagen cross-links. The protein is Procollagen-lysine,2-oxoglutarate 5-dioxygenase 1 (PLOD1) of Gallus gallus (Chicken).